Reading from the N-terminus, the 211-residue chain is Protein-L-isoaspartate O-methyltransferase (211 aa).

Residue S60 is part of the active site.

It belongs to the methyltransferase superfamily. L-isoaspartyl/D-aspartyl protein methyltransferase family.

The protein localises to the cytoplasm. The catalysed reaction is [protein]-L-isoaspartate + S-adenosyl-L-methionine = [protein]-L-isoaspartate alpha-methyl ester + S-adenosyl-L-homocysteine. Functionally, catalyzes the methyl esterification of L-isoaspartyl residues in peptides and proteins that result from spontaneous decomposition of normal L-aspartyl and L-asparaginyl residues. It plays a role in the repair and/or degradation of damaged proteins. The polypeptide is Protein-L-isoaspartate O-methyltransferase (Pseudomonas fluorescens (strain ATCC BAA-477 / NRRL B-23932 / Pf-5)).